The chain runs to 307 residues: Cytochrome f (307 aa).

The signal sequence occupies residues 1–24 (MKKNLFLVSVFASLFVGTANNALA). Heme-binding residues include Tyr-25, Cys-45, Cys-48, and His-49. Residues 273 to 293 (LQGLVIFLGFVLIAQVFLVLK) traverse the membrane as a helical segment.

The protein belongs to the cytochrome f family. The 4 large subunits of the cytochrome b6-f complex are cytochrome b6, subunit IV (17 kDa polypeptide, petD), cytochrome f and the Rieske protein, while the 4 small subunits are PetG, PetL, PetM and PetN. The complex functions as a dimer. Heme is required as a cofactor.

Its subcellular location is the plastid. The protein resides in the chloroplast thylakoid membrane. Component of the cytochrome b6-f complex, which mediates electron transfer between photosystem II (PSII) and photosystem I (PSI), cyclic electron flow around PSI, and state transitions. The chain is Cytochrome f from Ostreococcus tauri.